We begin with the raw amino-acid sequence, 370 residues long: Adaptive-response sensory kinase SasA (370 aa).

A Histidine kinase domain is found at 152–365 (MVAHELRTPL…CFYLTVPVWQ (214 aa)). Histidine 155 is subject to Phosphohistidine; by autocatalysis.

In terms of assembly, homooligomerizes. Interacts with KaiC. Participates in the KaiBC complex, whose core is composed of a KaiC homohexamer and 6 KaiB.

The catalysed reaction is ATP + protein L-histidine = ADP + protein N-phospho-L-histidine.. Member of the two-component regulatory system SasA/RpaA involved in genome-wide circadian gene expression. One of several clock output pathways. Participates in the Kai clock protein complex, the main circadian regulator in cyanobacteria, via its interaction with KaiC. KaiC enhances the autophosphorylation activity of SasA, which then transfers its phosphate group to RpaA to activate it. In addition to its output function, recruits fold-shifted KaiB (KaiB(fs)) to KaiC to cooperatively form the KaiB(6):KaiC(6) complex (independent of SasA kinase activity). Required for robustness of the circadian rhythm of gene expression and is involved in clock output, also required for adaptation to light/dark cycles. In Prochlorococcus marinus (strain MIT 9303), this protein is Adaptive-response sensory kinase SasA.